The chain runs to 572 residues: Squalene monooxygenase (572 aa).

Over 1-19 the chain is Cytoplasmic; sequence MWTFLGIATFTYFYKKCGD. An interaction with MARCHF6 region spans residues 1-98; the sequence is MWTFLGIATF…EQLESKKCRK (98 aa). Residues 20 to 40 lie within the membrane without spanning it; it reads VTLANKELLLCVLVFLSLGLV. Residues 41 to 572 lie on the Cytoplasmic side of the membrane; the sequence is LSYRCRHRHG…IYSEMKYLVH (532 aa). The interval 61–72 is required for degradation in response to high membrane cholesterol levels; that stretch reads QFAAFSDILSAL. The interval 116 to 572 is sufficient for enzyme activity; it reads TSFVTDPEVI…IYSEMKYLVH (457 aa). FAD contacts are provided by residues 131 to 132, 151 to 152, Arg159, Arg232, Val248, Asp406, and Met419; these read VL and ER. Positions 514-572 are hydrophobic; mediates interaction with membranes; sequence PLVLIRHFFSVAIYATYFCFKSEPWATKPRALFSSGAVLYKACSILFPLIYSEMKYLVH.

The protein belongs to the squalene monooxygenase family. Interacts (via N-terminal domain) with MARCHF6. Interacts with SMIM22; this interaction modulates lipid droplet formation. FAD serves as cofactor. Ubiquitinated by MARCHF6 in response to high cholesterol levels in intracellular membranes, leading to proteasomal degradation. In terms of tissue distribution, detected in liver.

The protein resides in the microsome membrane. It is found in the endoplasmic reticulum membrane. It carries out the reaction squalene + reduced [NADPH--hemoprotein reductase] + O2 = (S)-2,3-epoxysqualene + oxidized [NADPH--hemoprotein reductase] + H2O + H(+). Its pathway is terpene metabolism; lanosterol biosynthesis; lanosterol from farnesyl diphosphate: step 2/3. Functionally, catalyzes the stereospecific oxidation of squalene to (S)-2,3-epoxysqualene, and is considered to be a rate-limiting enzyme in steroid biosynthesis. In Mus musculus (Mouse), this protein is Squalene monooxygenase (Sqle).